Here is a 275-residue protein sequence, read N- to C-terminus: Thiazole synthase (275 aa).

The Schiff-base intermediate with DXP role is filled by K108. 1-deoxy-D-xylulose 5-phosphate contacts are provided by residues G169, 196 to 197, and 218 to 219; these read AG and NT.

The protein belongs to the ThiG family. As to quaternary structure, homotetramer. Forms heterodimers with either ThiH or ThiS.

Its subcellular location is the cytoplasm. It catalyses the reaction [ThiS sulfur-carrier protein]-C-terminal-Gly-aminoethanethioate + 2-iminoacetate + 1-deoxy-D-xylulose 5-phosphate = [ThiS sulfur-carrier protein]-C-terminal Gly-Gly + 2-[(2R,5Z)-2-carboxy-4-methylthiazol-5(2H)-ylidene]ethyl phosphate + 2 H2O + H(+). Its pathway is cofactor biosynthesis; thiamine diphosphate biosynthesis. Functionally, catalyzes the rearrangement of 1-deoxy-D-xylulose 5-phosphate (DXP) to produce the thiazole phosphate moiety of thiamine. Sulfur is provided by the thiocarboxylate moiety of the carrier protein ThiS. In vitro, sulfur can be provided by H(2)S. This Ralstonia pickettii (strain 12J) protein is Thiazole synthase.